Consider the following 120-residue polypeptide: U13-barytoxin-Tl1a (120 aa).

Positions M1–A20 are cleaved as a signal peptide. Cystine bridges form between C75–C90, C82–C95, and C89–C109.

Belongs to the neurotoxin 14 (magi-1) family. 05 (ICK-7) subfamily. ICK-7 sub-subfamily. As to expression, expressed by the venom gland.

It localises to the secreted. Ion channel inhibitor. This Trittame loki (Brush-footed trapdoor spider) protein is U13-barytoxin-Tl1a.